The sequence spans 289 residues: Serine/threonine-protein phosphatase PGAM5, mitochondrial (289 aa).

Residues 1-6 lie on the Mitochondrial matrix side of the membrane; it reads MAFRQA. A helical transmembrane segment spans residues 7–29; that stretch reads LQLAACGLAGGSAAVLFSAVAVG. The Mitochondrial intermembrane portion of the chain corresponds to 30 to 289; that stretch reads KPRAGGDAEP…FMPPDKITRS (260 aa). A disordered region spans residues 32 to 59; the sequence is RAGGDAEPRPAEPPAWAGGARPGPGVWD. The segment covering 45–56 has biased composition (low complexity); that stretch reads PAWAGGARPGPG. Residues 77–82 form an interaction with KEAP1 region; sequence NVESGE. 2 positions are modified to phosphoserine: serine 80 and serine 87. An N6-acetyllysine mark is found at lysine 116, lysine 144, and lysine 191.

The protein belongs to the phosphoglycerate mutase family. BPG-dependent PGAM subfamily. As to quaternary structure, dimer. Forms a ternary complex with NFE2L2 and KEAP1. Interacts with BCL2L1 and MAP3K5. Upon TNF-induced necrosis, forms in complex with RIPK1, RIPK3 and MLKL; the formation of this complex leads to PGAM5 phosphorylation. Isoform 2, but not isoform 1, interacts with DNM1L; this interaction leads to DNM1L dephosphorylation and activation and eventually to mitochondria fragmentation. In terms of processing, both isoform 1 and isoform 2 are phosphorylated by the RIPK1/RIPK3 complex under necrotic conditions. This phosphorylation increases PGAM5 phosphatase activity. Proteolytically cleaved by PARL in response to loss of mitochondrial membrane potential.

Its subcellular location is the mitochondrion outer membrane. It localises to the mitochondrion inner membrane. The catalysed reaction is O-phospho-L-seryl-[protein] + H2O = L-seryl-[protein] + phosphate. It carries out the reaction O-phospho-L-threonyl-[protein] + H2O = L-threonyl-[protein] + phosphate. Functionally, mitochondrial serine/threonine phosphatase that dephosphorylates various substrates and thus plays a role in different biological processes including cellular senescence or mitophagy. Modulates cellular senescence by regulating mitochondrial dynamics. Mechanistically, participates in mitochondrial fission through dephosphorylating DNM1L/DRP1. Additionally, dephosphorylates MFN2 in a stress-sensitive manner and consequently protects it from ubiquitination and degradation to promote mitochondrial network formation. Regulates mitophagy independent of PARKIN by interacting with and dephosphorylating FUNDC1, which interacts with LC3. Regulates anti-oxidative response by forming a tertiary complex with KEAP1 and NRF2. Regulates necroptosis by acting as a RIPK3 target and recruiting the RIPK1-RIPK3-MLKL necrosis 'attack' complex to mitochondria. The protein is Serine/threonine-protein phosphatase PGAM5, mitochondrial (PGAM5) of Homo sapiens (Human).